A 421-amino-acid polypeptide reads, in one-letter code: Probable UDP-arabinose 4-epimerase 1 (421 aa).

The Cytoplasmic segment spans residues 1 to 33 (MLPTNRNRPQQRPARSWYFISDMDFSDPKRKPR). The helical; Signal-anchor for type II membrane protein transmembrane segment at 34–53 (YLSKILMVALLTAMCVVMLT) threads the bilayer. The Lumenal segment spans residues 54 to 421 (QPPCHRRTPS…GYGPPQAMVL (368 aa)). 74 to 105 (HVLVTGGAGYIGSHAALRLLKDSFRVTIVDNL) serves as a coordination point for NAD(+). Tyrosine 222 functions as the Proton acceptor in the catalytic mechanism.

Belongs to the NAD(P)-dependent epimerase/dehydratase family. NAD(+) serves as cofactor.

It localises to the golgi apparatus. The protein resides in the golgi stack membrane. It carries out the reaction UDP-beta-L-arabinopyranose = UDP-alpha-D-xylose. Its pathway is nucleotide-sugar biosynthesis; UDP-L-arabinose biosynthesis; UDP-L-arabinose from UDP-alpha-D-xylose: step 1/1. It participates in cell wall biogenesis; cell wall polysaccharide biosynthesis. This is Probable UDP-arabinose 4-epimerase 1 (UEL-1) from Oryza sativa subsp. japonica (Rice).